We begin with the raw amino-acid sequence, 509 residues long: 2-isopropylmalate synthase (509 aa).

In terms of domain architecture, Pyruvate carboxyltransferase spans 5–267 (IQIFDTTLRD…QTALNLEETK (263 aa)). Asp-14, His-202, His-204, and Asn-238 together coordinate Mn(2+). The regulatory domain stretch occupies residues 391 to 509 (KLETLQLQYV…AAENVEKVGN (119 aa)).

The protein belongs to the alpha-IPM synthase/homocitrate synthase family. LeuA type 1 subfamily. In terms of assembly, homodimer. Mn(2+) serves as cofactor.

It localises to the cytoplasm. It catalyses the reaction 3-methyl-2-oxobutanoate + acetyl-CoA + H2O = (2S)-2-isopropylmalate + CoA + H(+). Its pathway is amino-acid biosynthesis; L-leucine biosynthesis; L-leucine from 3-methyl-2-oxobutanoate: step 1/4. Its function is as follows. Catalyzes the condensation of the acetyl group of acetyl-CoA with 3-methyl-2-oxobutanoate (2-ketoisovalerate) to form 3-carboxy-3-hydroxy-4-methylpentanoate (2-isopropylmalate). The protein is 2-isopropylmalate synthase of Staphylococcus aureus (strain Mu3 / ATCC 700698).